The sequence spans 159 residues: 3-hydroxyacyl-[acyl-carrier-protein] dehydratase FabZ (159 aa).

His-59 is a catalytic residue.

This sequence belongs to the thioester dehydratase family. FabZ subfamily.

The protein localises to the cytoplasm. The enzyme catalyses a (3R)-hydroxyacyl-[ACP] = a (2E)-enoyl-[ACP] + H2O. Involved in unsaturated fatty acids biosynthesis. Catalyzes the dehydration of short chain beta-hydroxyacyl-ACPs and long chain saturated and unsaturated beta-hydroxyacyl-ACPs. This Caulobacter vibrioides (strain ATCC 19089 / CIP 103742 / CB 15) (Caulobacter crescentus) protein is 3-hydroxyacyl-[acyl-carrier-protein] dehydratase FabZ.